A 472-amino-acid chain; its full sequence is Argininosuccinate lyase (472 aa).

It belongs to the lyase 1 family. Argininosuccinate lyase subfamily.

The protein resides in the cytoplasm. The enzyme catalyses 2-(N(omega)-L-arginino)succinate = fumarate + L-arginine. It functions in the pathway amino-acid biosynthesis; L-arginine biosynthesis; L-arginine from L-ornithine and carbamoyl phosphate: step 3/3. This is Argininosuccinate lyase from Mycolicibacterium paratuberculosis (strain ATCC BAA-968 / K-10) (Mycobacterium paratuberculosis).